We begin with the raw amino-acid sequence, 194 residues long: dATP triphosphohydrolase (194 aa).

Arg17 serves as a coordination point for dATP. Co(2+)-binding residues include His32, His71, Asp72, Glu75, Asp80, and Asp123.

This sequence belongs to the Caudovirales dATP triphosphohydrolase family. The cofactor is Co(2+).

It catalyses the reaction dATP + H2O = 2'-deoxyadenosine + triphosphate + H(+). The catalysed reaction is dADP + H2O = 2'-deoxyadenosine + diphosphate. The enzyme catalyses dAMP + H2O = 2'-deoxyadenosine + phosphate. In terms of biological role, catalyzes the hydrolysis of dATP, dADP and dAMP into dA. This step is essential for Z-genome synthesis (containing aminoadenine instead of adenine). Specifically removes dATP and its precursor dADP from the nucleotide pool of the host, preventing the incorporation of A into the phage genome and favoring the integration of the Z-base into the viral genome. This Salmonella phage PMBT28 protein is dATP triphosphohydrolase (datZ).